Consider the following 1039-residue polypeptide: Potassium-transporting ATPase alpha chain 2 (1039 aa).

Residues methionine 1–proline 102 are Cytoplasmic-facing. Residues glutamate 103–alanine 123 traverse the membrane as a helical segment. At phenylalanine 124–tyrosine 146 the chain is on the lumenal side. The helical transmembrane segment at leucine 147 to alanine 167 threads the bilayer. The Cytoplasmic portion of the chain corresponds to lysine 168–isoleucine 303. A helical membrane pass occupies residues glutamate 304–isoleucine 323. Residues isoleucine 324–serine 335 are Lumenal-facing. Residues isoleucine 336–alanine 353 form a helical membrane-spanning segment. The Cytoplasmic portion of the chain corresponds to threonine 354 to leucine 787. Aspartate 391 (4-aspartylphosphate intermediate) is an active-site residue. 2 residues coordinate Mg(2+): aspartate 732 and aspartate 736. Residues lysine 788–isoleucine 807 traverse the membrane as a helical segment. Topologically, residues tyrosine 808 to isoleucine 817 are lumenal. The chain crosses the membrane as a helical span at residues glycine 818–alanine 838. The Cytoplasmic segment spans residues tyrosine 839–arginine 858. The helical transmembrane segment at leucine 859 to phenylalanine 881 threads the bilayer. Residues leucine 882 to glycine 933 lie on the Lumenal side of the membrane. Residues tyrosine 934–lysine 953 traverse the membrane as a helical segment. Residues threonine 954–asparagine 967 lie on the Cytoplasmic side of the membrane. Residue serine 958 is modified to Phosphoserine; by PKA. The chain crosses the membrane as a helical span at residues lysine 968–tyrosine 986. Over glycine 987–alanine 1001 the chain is Lumenal. Residues glutamine 1002–lysine 1022 form a helical membrane-spanning segment. The Cytoplasmic portion of the chain corresponds to leucine 1023–tyrosine 1039.

It belongs to the cation transport ATPase (P-type) (TC 3.A.3) family. Type IIC subfamily. In terms of assembly, the ATPase pump is composed of a catalytic alpha subunit and an auxiliary non-catalytic beta subunit. The alpha subunit pairs with the beta subunit of gastric H(+)/K(+) ATPase ATP4B or the beta subunit of Na(+)/K(+) ATPases ATP1B1 and ATP1B3; this interaction is required for the formation of a functionally active pump and its targeting at the plasma membrane. In terms of tissue distribution, expressed in airway epithelial cells (at protein level). Found in skin and kidney. Detected in prostate basal cells (at protein level). Expression is increased in benign prostate hyperplasia and tumor tissues (at protein level).

It is found in the apical cell membrane. It catalyses the reaction K(+)(out) + ATP + H2O + H(+)(in) = K(+)(in) + ADP + phosphate + 2 H(+)(out). The catalysed reaction is K(+)(out) + Na(+)(in) + ATP + H2O = K(+)(in) + Na(+)(out) + ADP + phosphate + H(+). With respect to regulation, the ATPase activity is regulated by monovalent cations and pH. Up-regulated by K(+) ions in a dose-dependent way. Down-regulated by Na(+) ions. Inhibited by Na(+)/K(+)-ATPase inhibitor ouabain and H(+)/K(+)-ATPase inhibitor SCH-28080 with an intermediate sensitivity to completely resistant Na(+)/K(+)-ATPases and highly sensitive H(+)/K(+)-ATPases. In terms of biological role, the catalytic subunit of a H(+)/K(+) ATPase and/or Na(+)/K(+) ATPase pump which transports K(+) ions in exchange for Na(+) and/or H(+) ions across the apical membrane of epithelial cells. Uses ATP as an energy source to pump K(+) ions into the cell while transporting Na(+) and/or H(+) ions to the extracellular compartment. Involved in the maintenance of electrolyte homeostasis through K(+) ion absorption in kidney and colon. In the airway epithelium, may play a primary role in mucus acidification regulating its viscosity and clearance. This is Potassium-transporting ATPase alpha chain 2 from Homo sapiens (Human).